Reading from the N-terminus, the 310-residue chain is MNKANMLRTDKDMQIILFSEVSVGISANSILFIAHVCMILGENRPKPIDLYIAFLSLTQLMLLITMGLIAVDMFLSQGIWDSTTCQSLIYLHRLLRGLSLCATCLLNILWTITLSSRSFCSTKFKHKSPHHISGAFIFFCVLYMSFSSHLFISIIATHNLTSENFIYVTQSCSLLPLSYSRTSMFSAPMAIREAFLVSLMALSSGYMVALLWRHKKQAQHLHSTSLSSKASPEQRATRTILLLMSFFVVLYILENAVFYSRIKFKDGSILYCVQIILCHSYATVNPFVFICTEKHIIKFWESKCGRIVNI.

The Extracellular portion of the chain corresponds to Met1–Glu20. Residues Val21–Gly41 traverse the membrane as a helical segment. The Cytoplasmic segment spans residues Glu42–Leu50. Residues Tyr51 to Val71 traverse the membrane as a helical segment. The Extracellular segment spans residues Asp72–Arg93. Cysteines 85 and 172 form a disulfide. A helical transmembrane segment spans residues Leu94–Leu114. Residues Ser115 to Gly134 are Cytoplasmic-facing. The chain crosses the membrane as a helical span at residues Ala135–Ile155. The Extracellular portion of the chain corresponds to Ala156–Ala190. Asn159 carries N-linked (GlcNAc...) asparagine glycosylation. Residues Ile191–Leu211 form a helical membrane-spanning segment. The Cytoplasmic portion of the chain corresponds to Trp212 to Arg238. The chain crosses the membrane as a helical span at residues Thr239–Tyr259. The Extracellular portion of the chain corresponds to Ser260 to Ser268. The helical transmembrane segment at Ile269–Phe289 threads the bilayer. At Ile290–Ile310 the chain is on the cytoplasmic side.

This sequence belongs to the G-protein coupled receptor 1 family.

The protein resides in the cell membrane. Its function is as follows. Putative pheromone receptor implicated in the regulation of social and reproductive behavior. The chain is Vomeronasal type-1 receptor 40 (Vmn1r40) from Mus musculus (Mouse).